Reading from the N-terminus, the 463-residue chain is Mitochondrial distribution and morphology protein 10 (463 aa).

Belongs to the MDM10 family. In terms of assembly, component of the ER-mitochondria encounter structure (ERMES) or MDM complex, composed of MMM1, MDM10, MDM12 and MDM34. Associates with the mitochondrial outer membrane sorting assembly machinery SAM(core) complex.

The protein localises to the mitochondrion outer membrane. Component of the ERMES/MDM complex, which serves as a molecular tether to connect the endoplasmic reticulum and mitochondria. Components of this complex are involved in the control of mitochondrial shape and protein biogenesis and may function in phospholipid exchange. MDM10 is involved in the late assembly steps of the general translocase of the mitochondrial outer membrane (TOM complex). Functions in the TOM40-specific route of the assembly of outer membrane beta-barrel proteins, including the association of TOM40 with the receptor TOM22 and small TOM proteins. Can associate with the SAM(core) complex as well as the MDM12-MMM1 complex, both involved in late steps of the major beta-barrel assembly pathway, that is responsible for biogenesis of all outer membrane beta-barrel proteins. May act as a switch that shuttles between both complexes and channels precursor proteins into the TOM40-specific pathway. Plays a role in mitochondrial morphology and in the inheritance of mitochondria. This Candida dubliniensis (strain CD36 / ATCC MYA-646 / CBS 7987 / NCPF 3949 / NRRL Y-17841) (Yeast) protein is Mitochondrial distribution and morphology protein 10.